A 446-amino-acid polypeptide reads, in one-letter code: MKANKYLIFILGALGGLLYGYDNGVISGALLFIHKDIPLNSTTEGIVVSSMLIGAIVGAGSSGPLADKLGRRRLVMLIAIVFIIGALILAASTNLALLIIGRLIIGLAVGGSMSTVPVYLSEMAPTEYRGSLGSLNQLMITIGILAAYLVNYAFADIEGWRWMLGLAVVPSVILLVGIYFMPESPRWLLENRNEEAARQVMKITYDDSEIDKELKEMKEINAISESTWTVIKSPWLGRILIVGCIFAIFQQFIGINAVIFYSSSIFAKAGLGEAASILGSVGIGTINVLVTIVAIFVVDKIDRKKLLVGGNIGMIASLLIMAILIWTIGIASSAWIIIVCLSLFIVFFGISWGPVLWVMLPELFPMRARGAATGISALVLNIGTLIVSLFFPILSDALSTEWVFLIFAFIGVLAMIFVIKFLPETRGRSLEEIEYELRERTGARTE.

At 1-6 the chain is on the cytoplasmic side; sequence MKANKY. The helical transmembrane segment at 7–31 threads the bilayer; that stretch reads LIFILGALGGLLYGYDNGVISGALL. Topologically, residues 32–38 are extracellular; that stretch reads FIHKDIP. The helical transmembrane segment at 39–64 threads the bilayer; the sequence is LNSTTEGIVVSSMLIGAIVGAGSSGP. Topologically, residues 65–70 are cytoplasmic; sequence LADKLG. Residues 71–90 form a helical membrane-spanning segment; it reads RRRLVMLIAIVFIIGALILA. The Extracellular segment spans residues 91-94; that stretch reads ASTN. A helical transmembrane segment spans residues 95–122; the sequence is LALLIIGRLIIGLAVGGSMSTVPVYLSE. The Cytoplasmic segment spans residues 123–129; sequence MAPTEYR. The helical transmembrane segment at 130 to 152 threads the bilayer; it reads GSLGSLNQLMITIGILAAYLVNY. Residues 153 to 154 are Extracellular-facing; that stretch reads AF. The helical transmembrane segment at 155-180 threads the bilayer; it reads ADIEGWRWMLGLAVVPSVILLVGIYF. Residues 181–234 are Cytoplasmic-facing; that stretch reads MPESPRWLLENRNEEAARQVMKITYDDSEIDKELKEMKEINAISESTWTVIKSP. The helical transmembrane segment at 235–269 threads the bilayer; that stretch reads WLGRILIVGCIFAIFQQFIGINAVIFYSSSIFAKA. At 270-272 the chain is on the extracellular side; the sequence is GLG. A helical membrane pass occupies residues 273 to 295; that stretch reads EAASILGSVGIGTINVLVTIVAI. Over 296–303 the chain is Cytoplasmic; that stretch reads FVVDKIDR. Residues 304 to 324 form a helical membrane-spanning segment; it reads KKLLVGGNIGMIASLLIMAIL. The Extracellular portion of the chain corresponds to 325–329; sequence IWTIG. Residues 330-363 traverse the membrane as a helical segment; the sequence is IASSAWIIIVCLSLFIVFFGISWGPVLWVMLPEL. Topologically, residues 364–370 are cytoplasmic; sequence FPMRARG. The helical transmembrane segment at 371–399 threads the bilayer; that stretch reads AATGISALVLNIGTLIVSLFFPILSDALS. The Extracellular segment spans residues 400-401; the sequence is TE. The chain crosses the membrane as a helical span at residues 402 to 420; it reads WVFLIFAFIGVLAMIFVIK. Topologically, residues 421-446 are cytoplasmic; sequence FLPETRGRSLEEIEYELRERTGARTE.

It belongs to the major facilitator superfamily. Sugar transporter (TC 2.A.1.1) family.

It localises to the cell membrane. Inhibited by carbonyl cyanide m-chlorophenylhydrazone (CCCP) and by the human glucose transport inhibitors cytochalasin B, phloretin, and forskolin. Functionally, transporter highly specific for glucose uptake. The protein is Glucose transporter GlcP of Staphylococcus epidermidis (strain ATCC 12228 / FDA PCI 1200).